Reading from the N-terminus, the 115-residue chain is Large ribosomal subunit protein bL20 (115 aa).

It belongs to the bacterial ribosomal protein bL20 family.

Binds directly to 23S ribosomal RNA and is necessary for the in vitro assembly process of the 50S ribosomal subunit. It is not involved in the protein synthesizing functions of that subunit. The protein is Large ribosomal subunit protein bL20 of Malacoplasma penetrans (strain HF-2) (Mycoplasma penetrans).